The chain runs to 292 residues: MAASTEQATGGVEKTAAEEKPRVLEPGAAPFGNFPHYSRFHPPEQRLRLLPPELLRRLFPQSPETRPILGLDVGCNSGDLSVALYKHFLSLHDGETCLDASRELHLLCCDIDPVLVERAEKECPFPDGLTFITLDFMNQRTRKVLLSSFLSQFGRSVFDIGFCMSVTMWIHLNHGDQGLWEFLAHLSSLCRYLLVEPQPWKCYRAAARRLRKLGLHDFDHFRSLAIRGDMASQIVQILTQDHGMELVCCFGNTKWDRSLLLFRTKQATETHPIPESLIEEGKERNRIRFWRE.

Residues 1 to 22 (MAASTEQATGGVEKTAAEEKPR) form a disordered region. Residues arginine 46, asparagine 76, aspartate 110, 135–136 (DF), and methionine 164 each bind S-adenosyl-L-methionine. Residues 53–274 (ELLRRLFPQS…KQATETHPIP (222 aa)) form the Bin3-type SAM domain.

The protein belongs to the methyltransferase superfamily. In terms of assembly, interacts with DICER1; the interaction may be mediated by RNA.

It is found in the cytoplasm. The enzyme catalyses a 5'-end 5'-phospho-ribonucleoside-RNA + S-adenosyl-L-methionine = a 5'-end (5'-methylphospho)-ribonucleoside-RNA + S-adenosyl-L-homocysteine. The catalysed reaction is a 5'-end 5'-phospho-ribonucleoside-RNA + 2 S-adenosyl-L-methionine = a 5'-end (5'-bismethylphospho)-ribonucleoside-RNA + 2 S-adenosyl-L-homocysteine. Functionally, O-methyltransferase that specifically monomethylates 5'-monophosphate of cytoplasmic histidyl tRNA (tRNA(His)), acting as a capping enzyme by protecting tRNA(His) from cleavage by DICER1. Also able, with less efficiently, to methylate the 5' monophosphate of a subset of pre-miRNAs, acting as a negative regulator of miRNA processing. The 5' monophosphate of pre-miRNAs is recognized by DICER1 and is required for pre-miRNAs processing: methylation at this position reduces the processing of pre-miRNAs by DICER1. Was also reported to mediate dimethylation of pre-miR-145; however dimethylation cannot be reproduced by another group which observes a monomethylation of pre-miR-145. The polypeptide is RNA 5'-monophosphate methyltransferase (BCDIN3D) (Bos taurus (Bovine)).